Here is a 582-residue protein sequence, read N- to C-terminus: Pre-hexon-linking protein IIIa (582 aa).

The tract at residues Met1–Asn114 is peripentonal hexon-tethering domain. The interval Gly146–Asp259 is binding to hexon-linking protein. At Ser233 the chain carries Phosphoserine; by host. Phosphothreonine; by host is present on Thr282. The interval Gly437–Glu479 is disordered. The segment covering Arg451–Thr471 has biased composition (polar residues). Residues Ser458 and Ser465 each carry the phosphoserine; by host modification. Residue Tyr482 is modified to Phosphotyrosine; by host. Phosphoserine; by host is present on Ser503. A compositionally biased stretch (basic and acidic residues) spans Glu517–Pro526. Residues Glu517–Tyr582 form a disordered region. Residues Arg530 to Ala543 show a composition bias toward basic residues. Positions Gly566 to Tyr582 are excised as a propeptide.

It belongs to the adenoviridae hexon-linking protein IIIa family. As to quaternary structure, interacts with hexon proteins; this interaction tethers the peripentonal hexons to hexons situated in the facet. Interacts with the penton protein (via N-terminus). Interacts with packaging protein 3; this interaction is required to promote correct genome packaging. In terms of processing, cleaved near the C-terminus by the viral protease during virion maturation to form the mature protein.

Its subcellular location is the virion. It localises to the host nucleus. Functionally, structural component of the virion that acts as a cement protein on the capsid exterior which mediates the interactions between the hexons, including the peripentonal hexons, and reaches all the way to the penton vertices. Two hexon linking proteins IIIa, one from each facet, stabilize the unique edge interface between a pair of facets. As the virus enters the host cell, hexon linking proteins IIIa are shed concomitant with virion acidification in the endosome. During virus assembly, seems to play a role in the serotype specificity of the packaging of viral DNA via its interaction with packaging protein 3. This chain is Pre-hexon-linking protein IIIa, found in Human adenovirus A serotype 12 (HAdV-12).